A 1207-amino-acid polypeptide reads, in one-letter code: DNA-directed RNA polymerase subunit beta' (1207 aa).

The Zn(2+) site is built by Cys60, Cys62, Cys75, and Cys78. Residues Asp450, Asp452, and Asp454 each coordinate Mg(2+). Cys818, Cys892, Cys899, and Cys902 together coordinate Zn(2+).

Belongs to the RNA polymerase beta' chain family. In terms of assembly, the RNAP catalytic core consists of 2 alpha, 1 beta, 1 beta' and 1 omega subunit. When a sigma factor is associated with the core the holoenzyme is formed, which can initiate transcription. The cofactor is Mg(2+). Zn(2+) is required as a cofactor.

The catalysed reaction is RNA(n) + a ribonucleoside 5'-triphosphate = RNA(n+1) + diphosphate. Its function is as follows. DNA-dependent RNA polymerase catalyzes the transcription of DNA into RNA using the four ribonucleoside triphosphates as substrates. In Lactococcus lactis subsp. lactis (strain IL1403) (Streptococcus lactis), this protein is DNA-directed RNA polymerase subunit beta'.